Consider the following 296-residue polypeptide: NAD kinase (296 aa).

Residue Asp-73 is the Proton acceptor of the active site. NAD(+) is bound by residues 73-74 (DG), Lys-78, 151-152 (NE), Arg-178, Asp-180, and 191-196 (TAHAMS).

It belongs to the NAD kinase family. It depends on a divalent metal cation as a cofactor.

It localises to the cytoplasm. It catalyses the reaction NAD(+) + ATP = ADP + NADP(+) + H(+). Its function is as follows. Involved in the regulation of the intracellular balance of NAD and NADP, and is a key enzyme in the biosynthesis of NADP. Catalyzes specifically the phosphorylation on 2'-hydroxyl of the adenosine moiety of NAD to yield NADP. The polypeptide is NAD kinase (Francisella tularensis subsp. novicida (strain U112)).